A 20-amino-acid polypeptide reads, in one-letter code: Equinatoxin-1 (20 aa).

Residues 3 to 12 (AVAGAVIEGA) form a plays an important role in the hemolytic activity region. Residues 11–20 (GASLTFNVLQ) are N-terminal region.

It belongs to the actinoporin family. Sea anemone subfamily. As to quaternary structure, octamer or nonamer in membranes. Monomer in the soluble state.

The protein localises to the secreted. The protein resides in the nematocyst. Its subcellular location is the target cell membrane. Its function is as follows. Pore-forming protein that forms cations-selective hydrophilic pores of around 1 nm and causes cardiac stimulation and cytolysis. Pore formation is a multi-step process that involves specific recognition of membrane sphingomyelin (but neither cholesterol nor phosphatidylcholine) using aromatic rich region and adjacent phosphocholine (POC) binding site, firm binding to the membrane (mainly driven by hydrophobic interactions) accompanied by the transfer of the N-terminal region to the lipid-water interface and finally pore formation after oligomerization of monomers. Cytolytic effects include red blood cells hemolysis, platelet aggregation and lysis, cytotoxic and cytostatic effects on fibroblasts. Lethality in mammals has been ascribed to severe vasospasm of coronary vessels, cardiac arrhythmia, and inotropic effects. In Actinia equina (Beadlet anemone), this protein is Equinatoxin-1.